Here is a 1187-residue protein sequence, read N- to C-terminus: MYSHFKIHIGNELPNTINNYNNNNNSQHNDKMNLSKIKNNQDIPTSNTNISPKPISQQKRRKVEKGGVECKPIVPSTSSTSTLIPTPPPKLPQQQQELQHHSKPSSSSSSSSSSLSSSSTSIPNSPTPIFPVFLIPTQNMDLTCSYSNSQNYVESNINNNINNNINNNNNNNANNIQYINSNTYSGGCISRSSSSSSSSSSSSSGKSNENSIHLNSINNDNNNYYNKVLCYLNQLEDDQRKQYLFQQTQPPQPYPQQIQPPQEQLQQHQSQAPHSPLPQPQPPSQLQTQSIFQISPIPQNNSTQQILIQQTQIHITSTPNQTPISTPQQLGNQQFQFYQASKSTIIEKNNINIQINKNNNSGEFSTNSETNISSSNENINSNNNTKIDNNSNTSNGFNSNSNNNNNNNNNNNSNSVQLNYIEYDGINLNNQIFMNSDFNNEFFPNNTDENYPSDHNSNDNNNDKNNNTNNNIIINDDNNNNPNNNNINNNNSIEIIDEQKHQLQLQELQLQQEQQQEQQQEQLQQCHIEIIKNNSQFPFTPNTTESGFSSTSTTPSSTSVPSSLSNSSSAIPPPSSNYLDCSEPINNLESFNYNNSNTNTNNINNNNNNNNNNNNNNNNNNNNNNNNNNNNIENINIKNSNSNINSGYKSNINCSSPNRTVPNSPISNYSSMSSSSSPNSFTSSTSSLNISCSPNSDPLTPIVPTTPTLIEQTFQIQQPSFENIKNNTQISPSSHDGDTISEVIINHINNNSINNNNNNDKNNDIDNSNENLTTTTTTTTTTTTTTTTNNNKKKINNYKINNYNNNIDNNNHELNDDDNDDDDDDDVDDNDDNNNNNKSIYKKKEIKKREIRDELERKNEPKRRELIKKFIESKDSKFKKLTTDELLIMSPKVFGKISRYNMFEVFFGNEEVCGGNIKVSDTIKYRDQLEQILKKVWSTNEYWRCPLCEDIIISQKSFSQPHENRFSNKSCLKYHLLRLHFADVKSTIVKKRKIESRDMSSDPRYRKCKHDDCHSWITSKHMCDHIIIDHHIDDPQKSKTCGKCNELKKKLKKDFFNNINHYYESNKLSDLKIEYNNNHNNNINTNNNNNNNNNNNNNNNNNNNNNNNNNNNNNNNNNNNNNINNNNTNNNFKTIITTTTTSTTTPSNNIDDDNNKNNNNNNNNNNNNNNNNTNPIPNLPMPKNLQK.

A compositionally biased stretch (polar residues) spans 38 to 57 (KNNQDIPTSNTNISPKPISQ). Disordered regions lie at residues 38–127 (KNNQ…NSPT), 189–215 (ISRS…IHLN), 248–287 (TQPP…SQLQ), 358–415 (NNNS…NSNS), 443–490 (FPNN…INNN), 536–689 (QFPF…SSLN), 752–840 (SINN…NKSI), and 1079–1187 (HNNN…NLQK). 4 stretches are compositionally biased toward low complexity: residues 71–84 (KPIV…STLI), 104–124 (PSSS…SIPN), 190–215 (SRSS…IHLN), and 248–274 (TQPP…QAPH). Positions 443–455 (FPNNTDENYPSDH) are enriched in polar residues. Composition is skewed to low complexity over residues 458-490 (NDNN…INNN), 543-570 (TTES…SSSA), 585-653 (INNL…SNIN), 662-689 (PNSP…SSLN), 752-790 (SINN…TTNN), and 797-809 (NYKI…NIDN). Acidic residues predominate over residues 815 to 832 (NDDDNDDDDDDDVDDNDD). Low complexity-rich tracts occupy residues 1079-1149 (HNNN…PSNN) and 1156-1174 (KNNN…NNTN).

This is an uncharacterized protein from Dictyostelium discoideum (Social amoeba).